A 410-amino-acid polypeptide reads, in one-letter code: Peptidase T (410 aa).

Histidine 78 contacts Zn(2+). The active site involves aspartate 80. Residue aspartate 140 participates in Zn(2+) binding. Glutamate 173 acts as the Proton acceptor in catalysis. Positions 174, 196, and 379 each coordinate Zn(2+).

It belongs to the peptidase M20B family. Zn(2+) serves as cofactor.

The protein localises to the cytoplasm. It carries out the reaction Release of the N-terminal residue from a tripeptide.. Cleaves the N-terminal amino acid of tripeptides. The polypeptide is Peptidase T (Pectobacterium atrosepticum (strain SCRI 1043 / ATCC BAA-672) (Erwinia carotovora subsp. atroseptica)).